A 530-amino-acid polypeptide reads, in one-letter code: Arginine--tRNA ligase (530 aa).

Positions 113–123 match the 'HIGH' region motif; the sequence is ANPTGPLHIGH.

It belongs to the class-I aminoacyl-tRNA synthetase family. Monomer.

Its subcellular location is the cytoplasm. The enzyme catalyses tRNA(Arg) + L-arginine + ATP = L-arginyl-tRNA(Arg) + AMP + diphosphate. The protein is Arginine--tRNA ligase of Campylobacter jejuni subsp. jejuni serotype O:6 (strain 81116 / NCTC 11828).